Reading from the N-terminus, the 371-residue chain is tRNA-specific 2-thiouridylase MnmA (371 aa).

Residues 13 to 20 (GMSGGVDS) and Met-39 contribute to the ATP site. Residues 99-101 (NPD) are interaction with target base in tRNA. Residue Cys-104 is the Nucleophile of the active site. Cys-104 and Cys-200 form a disulfide bridge. ATP is bound at residue Gly-128. An interaction with tRNA region spans residues 150-152 (KDQ). The Cysteine persulfide intermediate role is filled by Cys-200. An interaction with tRNA region spans residues 308-309 (RY).

The protein belongs to the MnmA/TRMU family.

Its subcellular location is the cytoplasm. It catalyses the reaction S-sulfanyl-L-cysteinyl-[protein] + uridine(34) in tRNA + AH2 + ATP = 2-thiouridine(34) in tRNA + L-cysteinyl-[protein] + A + AMP + diphosphate + H(+). In terms of biological role, catalyzes the 2-thiolation of uridine at the wobble position (U34) of tRNA, leading to the formation of s(2)U34. The chain is tRNA-specific 2-thiouridylase MnmA from Geobacillus thermodenitrificans (strain NG80-2).